A 197-amino-acid chain; its full sequence is Recombination protein RecR (197 aa).

A C4-type zinc finger spans residues 56 to 71 (CQQCRNLSETEICGFC). Positions 79–174 (DQLCIVETPT…SVTRLAQGIP (96 aa)) constitute a Toprim domain.

This sequence belongs to the RecR family.

In terms of biological role, may play a role in DNA repair. It seems to be involved in an RecBC-independent recombinational process of DNA repair. It may act with RecF and RecO. The protein is Recombination protein RecR of Hydrogenovibrio crunogenus (strain DSM 25203 / XCL-2) (Thiomicrospira crunogena).